The primary structure comprises 316 residues: B3 domain-containing protein Os04g0581400 (316 aa).

The tract at residues 1-100 (MEFATTSSRF…GSGGGGGGED (100 aa)) is disordered. Acidic residues predominate over residues 13–36 (EEEEEEEGEQEMEQEQDEEEEEAE). Over residues 46-77 (TSAAAAATASSSSPTSVSPSATASAAASTSAS) the composition is skewed to low complexity. A compositionally biased stretch (gly residues) spans 88 to 98 (GASGSGGGGGG). The TF-B3 DNA-binding region spans 110-215 (FDKVVTPSDV…RLFIDWKRRA (106 aa)). The disordered stretch occupies residues 239 to 290 (GGAGASSCRPRRPPRSTSITAFARASTSATSTPLCRRGSSSSSAPQGRGFIS). Over residues 253-270 (RSTSITAFARASTSATST) the composition is skewed to low complexity.

It localises to the nucleus. The chain is B3 domain-containing protein Os04g0581400 from Oryza sativa subsp. japonica (Rice).